The sequence spans 169 residues: Proepiregulin (169 aa).

The N-terminal stretch at 1–29 is a signal peptide; the sequence is MTAGRRMEMLCAGRVPALLLCLGFHLLQA. Positions 30–62 are excised as a propeptide; that stretch reads VLSTTVIPSCIPGESSDNCTALVQTEDNPRVAQ. N-linked (GlcNAc...) asparagine glycosylation occurs at Asn-47. The Extracellular segment spans residues 60–119; it reads VAQVSITKCSSDMNGYCLHGQCIYLVDMSQNYCRCEVGYTGVRCEHFFLTVHQPLSKEYV. The 41-residue stretch at 64 to 104 folds into the EGF-like domain; the sequence is SITKCSSDMNGYCLHGQCIYLVDMSQNYCRCEVGYTGVRCE. 3 disulfide bridges follow: Cys-68–Cys-81, Cys-76–Cys-92, and Cys-94–Cys-103. Positions 109–169 are cleaved as a propeptide — removed in mature form; that stretch reads TVHQPLSKEY…TSGDPELPQV (61 aa). The helical transmembrane segment at 120-140 threads the bilayer; sequence ALTVILIILFLITVVGSTYYF. Residues 141–169 lie on the Cytoplasmic side of the membrane; the sequence is CRWYRNRKSKEPKKEYERVTSGDPELPQV.

Interacts with EGFR and ERBB4. In terms of tissue distribution, in normal adults, expressed predominantly in the placenta and peripheral blood leukocytes. High levels were detected in carcinomas of the bladder, lung, kidney and colon.

The protein resides in the secreted. Its subcellular location is the extracellular space. The protein localises to the cell membrane. Functionally, ligand of the EGF receptor/EGFR and ERBB4. Stimulates EGFR and ERBB4 tyrosine phosphorylation. Contributes to inflammation, wound healing, tissue repair, and oocyte maturation by regulating angiogenesis and vascular remodeling and by stimulating cell proliferation. The protein is Proepiregulin (EREG) of Homo sapiens (Human).